Consider the following 76-residue polypeptide: uncharacterized protein (76 aa).

This is an uncharacterized protein from Dictyostelium discoideum (Social amoeba).